The following is a 130-amino-acid chain: Small ribosomal subunit protein uS11 (130 aa).

Belongs to the universal ribosomal protein uS11 family. Part of the 30S ribosomal subunit. Interacts with proteins S7 and S18. Binds to IF-3.

In terms of biological role, located on the platform of the 30S subunit, it bridges several disparate RNA helices of the 16S rRNA. Forms part of the Shine-Dalgarno cleft in the 70S ribosome. The protein is Small ribosomal subunit protein uS11 of Prochlorococcus marinus (strain AS9601).